Here is a 493-residue protein sequence, read N- to C-terminus: Vinyl phenol reductase (493 aa).

FAD is bound by residues Ala19, Glu38, Ser46, Thr50, Gly52, Ala156, Asp224, Asn448, and Val467.

It belongs to the FAD-dependent oxidoreductase 2 family. FRD/SDH subfamily. FAD is required as a cofactor.

The catalysed reaction is 4-vinylphenol + NADH + H(+) = 4-ethylphenol + NAD(+). It carries out the reaction 3,4-dihydroxystyrene + NADH + H(+) = 4-ethylcatechol + NAD(+). It catalyses the reaction 2-methoxy-4-vinylphenol + NADH + H(+) = 4-ethyl-2-methoxyphenol + NAD(+). Involved in the production of ethylphenols during the degradation of hydroxycinnamic acids. Catalyzes the reduction of vinylphenols (4-vinylphenol (4-hydroxystyrene), 4-vinylcatechol (3,4-dihydroxystyrene), and 4-vinylguaiacol (2-methoxy-4-vinylphenol)) to their corresponding ethylphenols (4-ethylphenol, 4-ethylcatechol, and 4-ethylguaiacol, respectively) in the presence of NADH. These compounds are considered the most important flavor components of fermented soy sauce, and, on the other hand, are considered off flavor and responsible for sensorial wine and cider alteration. The 4-ethylphenol produced by the gut bacteria L.plantarum strain WCFS1 can get subsequent sulfation to 4-ethylphenyl sulfate (4EPS) by host sulfotransferase (SULT1A1); 4EPS can enter the brain and seems to alter brain activity. Therefore, this enzyme likely plays a role in gut microbiota-host metabolic interactions. This Lactiplantibacillus plantarum (strain ATCC BAA-793 / NCIMB 8826 / WCFS1) (Lactobacillus plantarum) protein is Vinyl phenol reductase.